The chain runs to 365 residues: Popy Class I histocompatibility antigen, A-1 alpha chain (365 aa).

The signal sequence occupies residues 1 to 24 (MAIMAPRTLLLLLSGALALTQTWA). The alpha-1 stretch occupies residues 25 to 114 (GSHSMRYFST…LRGYYNQSDG (90 aa)). Over 25-308 (GSHSMRYFST…ELSSQPTIPI (284 aa)) the chain is Extracellular. An N-linked (GlcNAc...) asparagine glycan is attached at asparagine 110. Residues 115 to 206 (GSHTIQRMFG…ENGKETLQRT (92 aa)) form an alpha-2 region. 2 disulfides stabilise this stretch: cysteine 125–cysteine 188 and cysteine 227–cysteine 283. Positions 207–298 (DAPKTHMTHH…GLPEPLTLRW (92 aa)) are alpha-3. The Ig-like C1-type domain maps to 209 to 297 (PKTHMTHHPV…EGLPEPLTLR (89 aa)). Residues 299–308 (ELSSQPTIPI) are connecting peptide. The helical transmembrane segment at 309 to 332 (VGIIAGLVLLGAVITGAVVAAVMW) threads the bilayer. Over 333–365 (RRRNSDRKGGSYSQAASNDSAQGSDVSLTACKV) the chain is Cytoplasmic. Residues 340-365 (KGGSYSQAASNDSAQGSDVSLTACKV) form a disordered region. Serine 343 carries the phosphoserine modification. Residues 343 to 359 (SYSQAASNDSAQGSDVS) show a composition bias toward polar residues. Tyrosine 344 carries the phosphotyrosine modification. Phosphoserine is present on residues serine 345, serine 349, serine 352, serine 356, and serine 359.

It belongs to the MHC class I family. Heterodimer of an alpha chain and a beta chain (beta-2-microglobulin).

Its subcellular location is the membrane. In terms of biological role, involved in the presentation of foreign antigens to the immune system. In Pongo pygmaeus (Bornean orangutan), this protein is Popy Class I histocompatibility antigen, A-1 alpha chain.